The chain runs to 239 residues: MSIEWLSEKLSEQGIELSNTQKEQFQKYYKLLVEWNKKMNLTSITDEHDVYLKHFYDSIAPSFYYDFNGQLSLCDIGAGAGFPSIPLKIVYPELKVTIVDSLNKRIQFLNHLAAELGLEDVSFVHDRAEIYGKGVYRESYDIVTARAVARLTVLSELCLPLVKKGGQFLALKSSKGEEELQEATFAINILGGNVKETHTFELPENAGERQMIIIDKRRQTSKKYPRKPGTPNKSPLVES.

S-adenosyl-L-methionine contacts are provided by residues Gly-77, Phe-82, 128 to 129, and Arg-146; that span reads AE. Residues 216-239 form a disordered region; it reads KRRQTSKKYPRKPGTPNKSPLVES.

It belongs to the methyltransferase superfamily. RNA methyltransferase RsmG family.

It localises to the cytoplasm. Its function is as follows. Specifically methylates the N7 position of guanine in position 535 of 16S rRNA. The sequence is that of Ribosomal RNA small subunit methyltransferase G from Staphylococcus epidermidis (strain ATCC 35984 / DSM 28319 / BCRC 17069 / CCUG 31568 / BM 3577 / RP62A).